A 515-amino-acid chain; its full sequence is tRNA pseudouridine synthase Pus10 (515 aa).

The Zn(2+) site is built by C21 and C24. Residues 42–85 (KEVTYELQKYLSHGDPAEENDTPPSKKAKIEEDTSSNEHLGNCE) are a coiled coil. The interval 55–82 (GDPAEENDTPPSKKAKIEEDTSSNEHLG) is disordered. Positions 96 and 99 each coordinate Zn(2+). The interval 291-304 (TPWIIDGERKIESS) is RNA binding forefinger loop. D331 acts as the Nucleophile in catalysis. Residues 428–443 (QKTPLRVLHRRPLASR) are RNA binding thumb loop.

It belongs to the pseudouridine synthase Pus10 family.

The protein localises to the nucleus. It is found in the cytoplasm. It localises to the mitochondrion. It carries out the reaction uridine(55) in tRNA = pseudouridine(55) in tRNA. The catalysed reaction is uridine(54) in tRNA = pseudouridine(54) in tRNA. Its function is as follows. Protein with different functions depending on its subcellular location: involved in miRNA processing in the nucleus and acts as a tRNA pseudouridylate synthase in the cytoplasm. In the cytoplasm, acts as a pseudouridylate synthase by catalyzing synthesis of pseudouridine(54) and pseudouridine(55) from uracil-54 and uracil-55, respectively, in the psi GC loop of a subset of tRNAs. tRNA pseudouridylate synthase activity is enhanced by the presence of 1-methyladenosine at position 53-61 of tRNAs. Does not show tRNA pseudouridylate synthase activity in the nucleus. In the nucleus, promotes primary microRNAs (pri-miRNAs) processing independently of its RNA pseudouridylate synthase activity. Binds pri-miRNAs. This Xenopus laevis (African clawed frog) protein is tRNA pseudouridine synthase Pus10.